The primary structure comprises 314 residues: Olfactory receptor 1468 (314 aa).

Topologically, residues 1–25 (MTEENQTVISQFLLLGLPIPSEHQH) are extracellular. N-linked (GlcNAc...) asparagine glycosylation occurs at Asn5. A helical transmembrane segment spans residues 26–49 (VFYALFLSMYLTTVLGNLIIIILI). Residues 50–57 (HLDSHLHT) lie on the Cytoplasmic side of the membrane. Residues 58–79 (PMYLFLSNLSFSDLCFSSVTMP) form a helical membrane-spanning segment. Over 80 to 100 (KLLQNMQSQVPSIPFAGCLTQ) the chain is Extracellular. A disulfide bridge links Cys97 with Cys189. Residues 101–120 (LYFYLYFADLESFLLVAMAY) traverse the membrane as a helical segment. The Cytoplasmic portion of the chain corresponds to 121–139 (DRYVAICFPLHYMSIMSPK). Residues 140–158 (LCVSLVVLSWVLTTFHAML) form a helical membrane-spanning segment. The Extracellular segment spans residues 159–196 (HTLLMARLSFCADNMIPHFFCDISPLLKLSCSDTHVNE). The chain crosses the membrane as a helical span at residues 197-219 (LVIFVMGGLVIVIPFVLIIVSYA). Topologically, residues 220–236 (RVVASILKVPSVRGIHK) are cytoplasmic. The chain crosses the membrane as a helical span at residues 237–260 (IFSTCGSHLSVVSLFYGTIIGLYL). Topologically, residues 261–272 (CPSANNSTVKET) are extracellular. The chain crosses the membrane as a helical span at residues 273-292 (VMAMMYTVVTPMLNPFIYSL). Residues 293 to 314 (RNRDMKEALIRVLCKKKITFCL) are Cytoplasmic-facing.

The protein belongs to the G-protein coupled receptor 1 family. Olfactory epithelium.

Its subcellular location is the cell membrane. Functionally, odorant receptor. This Rattus norvegicus (Rat) protein is Olfactory receptor 1468 (Olr1468).